Here is a 462-residue protein sequence, read N- to C-terminus: L-seryl-tRNA(Sec) selenium transferase (462 aa).

At lysine 295 the chain carries N6-(pyridoxal phosphate)lysine.

Belongs to the SelA family. As to quaternary structure, homodecamer; pentamer of dimers. Binds only one seryl-tRNA(Sec) per dimer. Requires pyridoxal 5'-phosphate as cofactor.

It is found in the cytoplasm. It catalyses the reaction L-seryl-tRNA(Sec) + selenophosphate + H(+) = L-selenocysteinyl-tRNA(Sec) + phosphate. It functions in the pathway aminoacyl-tRNA biosynthesis; selenocysteinyl-tRNA(Sec) biosynthesis; selenocysteinyl-tRNA(Sec) from L-seryl-tRNA(Sec) (bacterial route): step 1/1. Converts seryl-tRNA(Sec) to selenocysteinyl-tRNA(Sec) required for selenoprotein biosynthesis. This is L-seryl-tRNA(Sec) selenium transferase from Klebsiella pneumoniae subsp. pneumoniae (strain ATCC 700721 / MGH 78578).